The primary structure comprises 188 residues: Protein YecM (188 aa).

It to H.influenzae HI_1582/HI_1581.

The sequence is that of Protein YecM (yecM) from Escherichia coli (strain K12).